Consider the following 184-residue polypeptide: Lactoylglutathione lyase (184 aa).

At Ala-2 the chain carries N-acetylalanine. A disulfide bridge links Cys-19 with Cys-20. The region spanning 31 to 177 (LLQQTMLRIK…DGYWIEILNP (147 aa)) is the VOC domain. Residues Gln-34 and Arg-38 each contribute to the substrate site. Gln-34 is a binding site for Zn(2+). Glu-100 contacts Zn(2+). Asn-104 serves as a coordination point for substrate. At Thr-107 the chain carries Phosphothreonine. The substrate site is built by Arg-123 and His-127. Residue His-127 participates in Zn(2+) binding. The residue at position 139 (Cys-139) is an S-glutathionyl cysteine. At Lys-148 the chain carries N6-acetyllysine; alternate. At Lys-148 the chain carries N6-succinyllysine; alternate. 157-158 (KM) lines the substrate pocket. Zn(2+) is bound at residue Glu-173. The active-site Proton donor/acceptor is the Glu-173.

Belongs to the glyoxalase I family. Homodimer. Zn(2+) is required as a cofactor. Post-translationally, glutathionylation at Cys-139 inhibits enzyme activity. In terms of processing, phosphorylated at Thr-107 in the presence of CaMK2. However, this is a consensus site for phosphorylation by CK2 so phosphorylation may be mediated by CK2 rather than CaMK2. Phosphorylation is induced by TNF and suppresses the TNF-induced transcriptional activity of NF-kappa-B. Exists in a nitric oxide (NO)-modified form. The exact nature of the modification is unknown, but it suppresses the TNF-induced transcriptional activity of NF-kappa-B.

It carries out the reaction (R)-S-lactoylglutathione = methylglyoxal + glutathione. It functions in the pathway secondary metabolite metabolism; methylglyoxal degradation; (R)-lactate from methylglyoxal: step 1/2. Catalyzes the conversion of hemimercaptal, formed from methylglyoxal and glutathione, to S-lactoylglutathione. Involved in the regulation of TNF-induced transcriptional activity of NF-kappa-B. Required for normal osteoclastogenesis. The sequence is that of Lactoylglutathione lyase (Glo1) from Rattus norvegicus (Rat).